Here is a 204-residue protein sequence, read N- to C-terminus: 3-isopropylmalate dehydratase small subunit (204 aa).

The protein belongs to the LeuD family. LeuD type 1 subfamily. In terms of assembly, heterodimer of LeuC and LeuD.

The enzyme catalyses (2R,3S)-3-isopropylmalate = (2S)-2-isopropylmalate. Its pathway is amino-acid biosynthesis; L-leucine biosynthesis; L-leucine from 3-methyl-2-oxobutanoate: step 2/4. Functionally, catalyzes the isomerization between 2-isopropylmalate and 3-isopropylmalate, via the formation of 2-isopropylmaleate. The polypeptide is 3-isopropylmalate dehydratase small subunit (Vesicomyosocius okutanii subsp. Calyptogena okutanii (strain HA)).